We begin with the raw amino-acid sequence, 257 residues long: Thiazole synthase (257 aa).

Lys-100 acts as the Schiff-base intermediate with DXP in catalysis. 1-deoxy-D-xylulose 5-phosphate is bound by residues Gly-161, Ala-187–Gly-188, and Asn-209–Thr-210.

Belongs to the ThiG family. In terms of assembly, homotetramer. Forms heterodimers with either ThiH or ThiS.

It is found in the cytoplasm. It catalyses the reaction [ThiS sulfur-carrier protein]-C-terminal-Gly-aminoethanethioate + 2-iminoacetate + 1-deoxy-D-xylulose 5-phosphate = [ThiS sulfur-carrier protein]-C-terminal Gly-Gly + 2-[(2R,5Z)-2-carboxy-4-methylthiazol-5(2H)-ylidene]ethyl phosphate + 2 H2O + H(+). Its pathway is cofactor biosynthesis; thiamine diphosphate biosynthesis. In terms of biological role, catalyzes the rearrangement of 1-deoxy-D-xylulose 5-phosphate (DXP) to produce the thiazole phosphate moiety of thiamine. Sulfur is provided by the thiocarboxylate moiety of the carrier protein ThiS. In vitro, sulfur can be provided by H(2)S. This chain is Thiazole synthase, found in Zymomonas mobilis subsp. mobilis (strain ATCC 31821 / ZM4 / CP4).